We begin with the raw amino-acid sequence, 315 residues long: Hydrogenase-4 component C (315 aa).

At 1–10 (MRQTLCDGYL) the chain is on the periplasmic side. A helical transmembrane segment spans residues 11 to 31 (VIFALAQAVILLMLTPLFTGI). Residues 32-73 (SRQIRARMHSRRGPGIWQDYRDIHKLFKRQEVAPTSSGLMFR) lie on the Cytoplasmic side of the membrane. The helical transmembrane segment at 74-94 (LMPWVLISSMLVLAMALPLFI) threads the bilayer. Topologically, residues 95-98 (TVSP) are periplasmic. A helical transmembrane segment spans residues 99–119 (FAGGGDLITLIYLLALFRFFF). Topologically, residues 120 to 140 (ALSGLDTGSPFAGVGASRELT) are cytoplasmic. Residues 141–161 (LGILVEPMLILSLLVLALIAG) traverse the membrane as a helical segment. Residues 162-181 (STHIEMISNTLAMGWNSPLT) are Periplasmic-facing. A helical transmembrane segment spans residues 182 to 202 (TVLALLACGFACFIEMGKIPF). At 203 to 228 (DVAEAEQELQEGPLTEYSGAGLALAK) the chain is on the cytoplasmic side. The helical transmembrane segment at 229–249 (WGLGLKQVVMASLFVALFLPF) threads the bilayer. The Periplasmic portion of the chain corresponds to 250–256 (GRAQELS). A helical transmembrane segment spans residues 257–277 (LACLLTSLVVTLLKVLLIFVL). At 278–289 (ASIAENTLARGR) the chain is on the cytoplasmic side. Residues 290–310 (FLLIHHVTWLGFSLAALAWVF) traverse the membrane as a helical segment. Residues 311–315 (WLTGL) lie on the Periplasmic side of the membrane.

This sequence belongs to the complex I subunit 1 family.

It is found in the cell inner membrane. Possible component of hydrogenase 4. The protein is Hydrogenase-4 component C of Escherichia coli (strain K12).